The following is a 639-amino-acid chain: Chaperone protein DnaK (639 aa).

Residue Thr198 is modified to Phosphothreonine; by autocatalysis. Over residues 603–618 (AKAQTQGGAQEGAAKQ) the composition is skewed to low complexity. Positions 603 to 639 (AKAQTQGGAQEGAAKQSNATADDVVDAEFEEVKDDKK) are disordered. Residues 625 to 639 (DVVDAEFEEVKDDKK) are compositionally biased toward acidic residues.

This sequence belongs to the heat shock protein 70 family.

Acts as a chaperone. The polypeptide is Chaperone protein DnaK (Shewanella oneidensis (strain ATCC 700550 / JCM 31522 / CIP 106686 / LMG 19005 / NCIMB 14063 / MR-1)).